Here is a 105-residue protein sequence, read N- to C-terminus: L-rhamnose mutarotase (105 aa).

Residue Tyr-19 participates in substrate binding. His-23 functions as the Proton donor in the catalytic mechanism. Substrate is bound by residues Tyr-42 and Trp-77 to Trp-78.

The protein belongs to the rhamnose mutarotase family. Homodimer.

The protein localises to the cytoplasm. It catalyses the reaction alpha-L-rhamnose = beta-L-rhamnose. The protein operates within carbohydrate metabolism; L-rhamnose metabolism. Its function is as follows. Involved in the anomeric conversion of L-rhamnose. The chain is L-rhamnose mutarotase from Mesorhizobium japonicum (strain LMG 29417 / CECT 9101 / MAFF 303099) (Mesorhizobium loti (strain MAFF 303099)).